A 717-amino-acid polypeptide reads, in one-letter code: Aryl hydrocarbon receptor nuclear translocator 2 (717 aa).

Disordered stretches follow at residues 1-20 (MATP…PGSV) and 35-74 (MAGA…IERR). The residue at position 42 (Arg42) is an Omega-N-methylarginine. A compositionally biased stretch (basic and acidic residues) spans 63–73 (FSRENHSEIER). Residues 63–116 (FSRENHSEIERRRRNKMTQYITELSDMVPTCSALARKPDKLTILRMAVSHMKSM) enclose the bHLH domain. PAS domains are found at residues 134 to 209 (TEQE…MTGR) and 323 to 393 (PVCM…VKLK). The PAC domain occupies 398-441 (SVMYRFRTKNREWMLIRTSSFTFQNPYSDEIEYIICTNTNVKQL). Residues 548-717 (NDIQSSSSTG…DLGMFPPFSE (170 aa)) are disordered. 2 stretches are compositionally biased toward polar residues: residues 549-574 (DIQS…QVAW) and 585-605 (QIPS…TSHT). Residues 610–625 (PSSYSPLSSPATSSPS) show a composition bias toward low complexity. Polar residues predominate over residues 642 to 651 (SGQSSGQFQG). Residues 658 to 680 (SQWQSQHHGQQSGEQHSHQQPGQ) show a composition bias toward low complexity.

In terms of assembly, efficient DNA binding requires dimerization with another bHLH protein. Heterodimer with NPAS4. Heterodimer with SIM1. Heterodimer with the aryl hydrocarbon receptor (AHR) or the SIM1 protein. Interacts with TACC3.

It localises to the nucleus. Functionally, transcription factor that plays a role in the development of the hypothalamo-pituitary axis, postnatal brain growth, and visual and renal function. Specifically recognizes the xenobiotic response element (XRE). The sequence is that of Aryl hydrocarbon receptor nuclear translocator 2 (ARNT2) from Homo sapiens (Human).